Here is a 165-residue protein sequence, read N- to C-terminus: 2-C-methyl-D-erythritol 2,4-cyclodiphosphate synthase (165 aa).

Residues Asp8 and His10 each coordinate a divalent metal cation. 4-CDP-2-C-methyl-D-erythritol 2-phosphate contacts are provided by residues 8-10 (DVH) and 34-35 (HS). His42 provides a ligand contact to a divalent metal cation. Residues 56 to 58 (DIG), 61 to 65 (FPDTD), 132 to 135 (TTTE), Phe139, and Arg142 each bind 4-CDP-2-C-methyl-D-erythritol 2-phosphate.

Belongs to the IspF family. As to quaternary structure, homotrimer. It depends on a divalent metal cation as a cofactor.

The enzyme catalyses 4-CDP-2-C-methyl-D-erythritol 2-phosphate = 2-C-methyl-D-erythritol 2,4-cyclic diphosphate + CMP. The protein operates within isoprenoid biosynthesis; isopentenyl diphosphate biosynthesis via DXP pathway; isopentenyl diphosphate from 1-deoxy-D-xylulose 5-phosphate: step 4/6. In terms of biological role, involved in the biosynthesis of isopentenyl diphosphate (IPP) and dimethylallyl diphosphate (DMAPP), two major building blocks of isoprenoid compounds. Catalyzes the conversion of 4-diphosphocytidyl-2-C-methyl-D-erythritol 2-phosphate (CDP-ME2P) to 2-C-methyl-D-erythritol 2,4-cyclodiphosphate (ME-CPP) with a corresponding release of cytidine 5-monophosphate (CMP). The sequence is that of 2-C-methyl-D-erythritol 2,4-cyclodiphosphate synthase from Halothermothrix orenii (strain H 168 / OCM 544 / DSM 9562).